The primary structure comprises 315 residues: MVKLLLKDLGEKMILEGAIIYSNLLVLLALGLTLTYITTNVPNFAQGSYAIVGSYVALTLLKLFGICPYLSLPVLFVVGAIVGLITYLALKPLIKRNASVEILMIATLAIDLILLGVIGAYSEILSQIVGSTQAKFVFANLDFSLFGFKGILFVSTFVVILLLIGLYLLLYKTKFGIALRASMENPSLAQTMGIDVEKTRLFSWILSGALAGVAGGLLPFMQEIVPATGDLIIISIFAASIVGGLRHISGALIGGYIIGISESLITYYLASAFGTGFLVYGKVISLIIMIATLLIAPYGITGVDWKKLKRLLSTS.

Transmembrane regions (helical) follow at residues Ile14 to Leu34, Tyr49 to Tyr69, Leu70 to Leu90, Val100 to Ala120, Gly150 to Leu170, Leu201 to Met221, Ile224 to Gly244, Gly250 to Ala270, and Val283 to Val303.

Belongs to the binding-protein-dependent transport system permease family. LivHM subfamily.

Its subcellular location is the cell membrane. Part of the binding-protein-dependent transport system for branched-chain amino acids. Probably responsible for the translocation of the substrates across the membrane. This Methanocaldococcus jannaschii (strain ATCC 43067 / DSM 2661 / JAL-1 / JCM 10045 / NBRC 100440) (Methanococcus jannaschii) protein is Probable branched-chain amino acid transport permease protein LivH (livH).